Here is a 141-residue protein sequence, read N- to C-terminus: Translation initiation factor IF-1, chloroplastic (141 aa).

A chloroplast-targeting transit peptide spans 1 to 46 (MLQLCSTFRPQLLLPCQFRFTNGVLIPQINYVASNSVVNIRPMIRC). The tract at residues 49-69 (ASGGRGGANRSKPAKPQVKEG) is disordered. The S1-like domain occupies 63-138 (KPQVKEGSNK…TKGRIIFRMS (76 aa)).

It belongs to the IF-1 family. In terms of assembly, component of the 30S ribosomal translation pre-initiation complex which assembles on the 30S ribosome in the order IF-2 and IF-3, IF-1 and N-formylmethionyl-tRNA(fMet); mRNA recruitment can occur at any time during PIC assembly.

The protein resides in the plastid. The protein localises to the chloroplast. Its function is as follows. One of the essential components for the initiation of protein synthesis. Stabilizes the binding of IF-2 and IF-3 on the 30S subunit to which N-formylmethionyl-tRNA(fMet) subsequently binds. Helps modulate mRNA selection, yielding the 30S pre-initiation complex (PIC). Upon addition of the 50S ribosomal subunit IF-1, IF-2 and IF-3 are released leaving the mature 70S translation initiation complex. The chain is Translation initiation factor IF-1, chloroplastic from Arabidopsis thaliana (Mouse-ear cress).